A 595-amino-acid polypeptide reads, in one-letter code: Phenylalanine--tRNA ligase beta subunit (595 aa).

The segment at 86–90 is 3'-CCA residue in tRNA; that stretch reads KLSKP. Residues 292-370 enclose the B5 domain; the sequence is FNDRIMDVSI…VGYGFNNLPK (79 aa). Mg(2+)-binding residues include Asp-348, Asp-354, Glu-357, and Asp-358.

This sequence belongs to the phenylalanyl-tRNA synthetase beta subunit family. Type 2 subfamily. In terms of assembly, tetramer of two alpha and two beta subunits. Mg(2+) serves as cofactor.

The protein localises to the cytoplasm. The enzyme catalyses tRNA(Phe) + L-phenylalanine + ATP = L-phenylalanyl-tRNA(Phe) + AMP + diphosphate + H(+). This is Phenylalanine--tRNA ligase beta subunit (FRS1) from Saccharomyces cerevisiae (strain ATCC 204508 / S288c) (Baker's yeast).